The following is a 704-amino-acid chain: mRNA (2'-O-methyladenosine-N(6)-)-methyltransferase (704 aa).

The tract at residues 1-33 (MANENHGSPREEASLLSHSPGTSNQSQPCSPKP) is disordered. A compositionally biased stretch (polar residues) spans 16-29 (LSHSPGTSNQSQPC). Serine 30 is modified (phosphoserine). The region spanning 43-77 (ELVHAGWEKCWSRRENRPYYFNRFTNQSLWEMPVL) is the WW domain. The tract at residues 88–151 (GLNATPLPQD…PSSPSIPGTP (64 aa)) is disordered. The short motif at 109–113 (KPRKR) is the Nuclear localization signal element. Serine 116 is subject to Phosphoserine. Positions 136–149 (PTGQSVPSSPSIPG) are enriched in polar residues. Residue threonine 152 is modified to Phosphothreonine. Substrate is bound by residues arginine 235 and arginine 265. Position 553–556 (553–556 (NPPF)) interacts with S-adenosyl-L-methionine. Substrate-binding positions include glutamate 558 and 588–592 (WREPP). 614 to 616 (FEH) provides a ligand contact to S-adenosyl-L-methionine. Residues 663 to 704 (LSAAYRQSGRSHSSGSSSSSSSEAKDRDSGREQGPSREPHPT) form a disordered region. Residues 669–684 (QSGRSHSSGSSSSSSS) carry the Nuclear localization signal motif. Positions 670–684 (SGRSHSSGSSSSSSS) are enriched in low complexity. Basic and acidic residues predominate over residues 685–704 (EAKDRDSGREQGPSREPHPT).

This sequence belongs to the CAPAM family. As to quaternary structure, interacts with POLR2A; interacts with the phosphorylated C-terminal domain (CTD) of POLR2A. As to expression, ubiquitous.

The protein resides in the nucleus. The catalysed reaction is a 5'-end (N(7)-methyl 5'-triphosphoguanosine)-(2'-O-methyladenosine) in mRNA + S-adenosyl-L-methionine = a 5'-end (N(7)-methyl 5'-triphosphoguanosine)-(N(6),2'-O-dimethyladenosine) in mRNA + S-adenosyl-L-homocysteine + H(+). Its activity is regulated as follows. Cap-specific adenosine methyltransferase activity is inhibited by zinc. Its function is as follows. Cap-specific adenosine methyltransferase that catalyzes formation of N(6),2'-O-dimethyladenosine cap (m6A(m)) by methylating the adenosine at the second transcribed position of capped mRNAs. Recruited to the early elongation complex of RNA polymerase II (RNAPII) via interaction with POLR2A and mediates formation of m6A(m) co-transcriptionally. The polypeptide is mRNA (2'-O-methyladenosine-N(6)-)-methyltransferase (Homo sapiens (Human)).